Reading from the N-terminus, the 186-residue chain is MGLKADNWIRKMALEHKMIEPFCEANIGKGVVSYGLSSYGYDIRVGREFKIFTNVNSTVVDPKNFVEENVVDFEGDVCIVPANSFALARTIEYFKMPDNVLAICLGKSTYARCGIIVNVTPFEPGFEGHITIEISNTTPLPAKIYANEGIAQVLFLQGDEKCDTTYKDKKGKYQAQTGITLPRILK.

107-112 (KSTYAR) serves as a coordination point for dCTP. Glu133 serves as the catalytic Proton donor/acceptor. Residues Gln152, Tyr166, and Gln176 each contribute to the dCTP site.

Belongs to the dCTP deaminase family. In terms of assembly, homotrimer.

The catalysed reaction is dCTP + H2O + H(+) = dUTP + NH4(+). Its pathway is pyrimidine metabolism; dUMP biosynthesis; dUMP from dCTP (dUTP route): step 1/2. Its function is as follows. Catalyzes the deamination of dCTP to dUTP. The polypeptide is dCTP deaminase (Campylobacter jejuni subsp. jejuni serotype O:2 (strain ATCC 700819 / NCTC 11168)).